A 286-amino-acid chain; its full sequence is MMATPNQTACNAESPVALEEAKTSGAPGSPQTPPERHDSGGSLPLTPRMESHSEDEDLAGAVGGLGWNSRSPRTQSPGGCSAEAVLARKKHRRRPSKRKRHWRPYLELSWAEKQQRDERQSQRASRVREEMFAKGQPVAPYNTTQFLMNDRDPEEPNLDVPHGISHPGSSGESEAGDSDGRGRAHGEFQRKDFSETYERFHTESLQGRSKQELVRDYLELEKRLSQAEEETRRLQQLQACTGQQSCRQVEELAAEVQRLRTENQRLRQENQMWNREGCRCDEEPGT.

Over residues 1–11 the composition is skewed to polar residues; the sequence is MMATPNQTACN. Residues 1–195 are disordered; the sequence is MMATPNQTAC…GEFQRKDFSE (195 aa). Ser-29 is modified (phosphoserine). At Thr-32 the chain carries Phosphothreonine. At Ser-39 the chain carries Phosphoserine. Position 46 is a phosphothreonine (Thr-46). Phosphoserine occurs at positions 51, 53, 71, 76, and 81. A compositionally biased stretch (polar residues) spans 68–78; that stretch reads NSRSPRTQSPG. Residues 87–103 show a composition bias toward basic residues; the sequence is ARKKHRRRPSKRKRHWR. Over residues 113-132 the composition is skewed to basic and acidic residues; that stretch reads KQQRDERQSQRASRVREEMF. An interaction with P-TEFb region spans residues 140–143; it reads PYNT. Residues 178 to 195 are compositionally biased toward basic and acidic residues; the sequence is SDGRGRAHGEFQRKDFSE. A coiled-coil region spans residues 207–277; sequence GRSKQELVRD…QENQMWNREG (71 aa). Residues 226–286 form an interaction with CCNT1, HEXIM1 and HEXIM2 region; sequence QAEEETRRLQ…GCRCDEEPGT (61 aa).

This sequence belongs to the HEXIM family. In terms of assembly, homooligomer and heterooligomer with HEXIM1; probably dimeric. Core component of the 7SK RNP complex, at least composed of 7SK RNA, LARP7, MEPCE, HEXIM1 (or HEXIM2) and P-TEFb (composed of CDK9 and CCNT1/cyclin-T1). Interacts with CCNT2. Ubiquitously expressed with higher expression in testis. HEXIM1 and HEXIM2 are differentially expressed.

The protein resides in the nucleus. In terms of biological role, transcriptional regulator which functions as a general RNA polymerase II transcription inhibitor. Core component of the 7SK RNP complex: in cooperation with 7SK snRNA sequesters P-TEFb in a large inactive 7SK snRNP complex preventing RNA polymerase II phosphorylation and subsequent transcriptional elongation. The protein is Protein HEXIM2 (HEXIM2) of Homo sapiens (Human).